The sequence spans 351 residues: Translation initiation factor eIF2B subunit beta (351 aa).

The protein belongs to the eIF-2B alpha/beta/delta subunits family. As to quaternary structure, component of the translation initiation factor 2B (eIF2B) complex which is a heterodecamer of two sets of five different subunits: alpha, beta, gamma, delta and epsilon. Subunits alpha, beta and delta comprise a regulatory subcomplex and subunits epsilon and gamma comprise a catalytic subcomplex. Within the complex, the hexameric regulatory complex resides at the center, with the two heterodimeric catalytic subcomplexes bound on opposite sides.

It localises to the cytoplasm. The protein resides in the cytosol. Its activity is regulated as follows. Activated by the chemical integrated stress response (ISR) inhibitor ISRIB which stimulates guanine nucleotide exchange factor activity for both phosphorylated and unphosphorylated eIF2. Its function is as follows. Acts as a component of the translation initiation factor 2B (eIF2B) complex, which catalyzes the exchange of GDP for GTP on eukaryotic initiation factor 2 (eIF2) gamma subunit. Its guanine nucleotide exchange factor activity is repressed when bound to eIF2 complex phosphorylated on the alpha subunit, thereby limiting the amount of methionyl-initiator methionine tRNA available to the ribosome and consequently global translation is repressed. This chain is Translation initiation factor eIF2B subunit beta (EIF2B2), found in Oryctolagus cuniculus (Rabbit).